The sequence spans 221 residues: 7-cyano-7-deazaguanine synthase (221 aa).

Residue 10–20 (FSGGQDSTTCL) participates in ATP binding. Cys-186, Cys-195, Cys-198, and Cys-201 together coordinate Zn(2+).

Belongs to the QueC family. As to quaternary structure, homodimer. Zn(2+) is required as a cofactor.

It catalyses the reaction 7-carboxy-7-deazaguanine + NH4(+) + ATP = 7-cyano-7-deazaguanine + ADP + phosphate + H2O + H(+). Its pathway is purine metabolism; 7-cyano-7-deazaguanine biosynthesis. Catalyzes the ATP-dependent conversion of 7-carboxy-7-deazaguanine (CDG) to 7-cyano-7-deazaguanine (preQ(0)). This is 7-cyano-7-deazaguanine synthase from Geobacillus thermodenitrificans (strain NG80-2).